An 85-amino-acid polypeptide reads, in one-letter code: Mitochondrial protein pet191 homolog (85 aa).

Residues 18-61 (HSDCMFVKKKSARECLKNKDELPEECKNLIEAYGECKRQMLDMT) enclose the CHCH domain. The Cx10C motif signature appears at 21-32 (CMFVKKKSAREC). Cystine bridges form between Cys-21-Cys-53 and Cys-32-Cys-43. The short motif at 43-53 (CKNLIEAYGEC) is the Cx9C motif element. Residues 65-85 (RIAPEKNTDQDTEKPSNVDEQ) form a disordered region.

It belongs to the PET191 family.

It localises to the mitochondrion. Involved in the assembly of cytochrome c oxidase. The polypeptide is Mitochondrial protein pet191 homolog (Schizosaccharomyces pombe (strain 972 / ATCC 24843) (Fission yeast)).